A 493-amino-acid chain; its full sequence is ATP synthase subunit beta (493 aa).

Residue 169 to 176 (GGAGVGKT) coordinates ATP.

The protein belongs to the ATPase alpha/beta chains family. F-type ATPases have 2 components, CF(1) - the catalytic core - and CF(0) - the membrane proton channel. CF(1) has five subunits: alpha(3), beta(3), gamma(1), delta(1), epsilon(1). CF(0) has three main subunits: a(1), b(2) and c(9-12). The alpha and beta chains form an alternating ring which encloses part of the gamma chain. CF(1) is attached to CF(0) by a central stalk formed by the gamma and epsilon chains, while a peripheral stalk is formed by the delta and b chains.

It localises to the cell inner membrane. The enzyme catalyses ATP + H2O + 4 H(+)(in) = ADP + phosphate + 5 H(+)(out). In terms of biological role, produces ATP from ADP in the presence of a proton gradient across the membrane. The catalytic sites are hosted primarily by the beta subunits. In Gluconacetobacter diazotrophicus (strain ATCC 49037 / DSM 5601 / CCUG 37298 / CIP 103539 / LMG 7603 / PAl5), this protein is ATP synthase subunit beta.